The chain runs to 918 residues: UPF0182 protein CPF_0011 (918 aa).

Helical transmembrane passes span 8-28 (TVLI…NFII), 46-66 (LIAI…VIAI), 91-111 (FLLS…TTQW), 151-171 (AISL…ALGF), 200-220 (LAVL…LKSY), 243-263 (IFYK…FISI), and 271-291 (IIIS…VAIF). Basic and acidic residues predominate over residues 857-869 (EENKNSNKDETPK). The disordered stretch occupies residues 857–876 (EENKNSNKDETPKNEITSDN).

It belongs to the UPF0182 family.

It localises to the cell membrane. This is UPF0182 protein CPF_0011 from Clostridium perfringens (strain ATCC 13124 / DSM 756 / JCM 1290 / NCIMB 6125 / NCTC 8237 / Type A).